Here is a 216-residue protein sequence, read N- to C-terminus: Thiamine-phosphate synthase (216 aa).

4-amino-2-methyl-5-(diphosphooxymethyl)pyrimidine is bound by residues 37–41 and aspartate 68; that span reads QVRSK. Positions 69 and 93 each coordinate Mg(2+). Threonine 112 contributes to the 4-amino-2-methyl-5-(diphosphooxymethyl)pyrimidine binding site. 2-[(2R,5Z)-2-carboxy-4-methylthiazol-5(2H)-ylidene]ethyl phosphate is bound at residue 140–142; it reads TPT. Lysine 143 provides a ligand contact to 4-amino-2-methyl-5-(diphosphooxymethyl)pyrimidine.

The protein belongs to the thiamine-phosphate synthase family. Mg(2+) serves as cofactor.

It catalyses the reaction 2-[(2R,5Z)-2-carboxy-4-methylthiazol-5(2H)-ylidene]ethyl phosphate + 4-amino-2-methyl-5-(diphosphooxymethyl)pyrimidine + 2 H(+) = thiamine phosphate + CO2 + diphosphate. The enzyme catalyses 2-(2-carboxy-4-methylthiazol-5-yl)ethyl phosphate + 4-amino-2-methyl-5-(diphosphooxymethyl)pyrimidine + 2 H(+) = thiamine phosphate + CO2 + diphosphate. The catalysed reaction is 4-methyl-5-(2-phosphooxyethyl)-thiazole + 4-amino-2-methyl-5-(diphosphooxymethyl)pyrimidine + H(+) = thiamine phosphate + diphosphate. It participates in cofactor biosynthesis; thiamine diphosphate biosynthesis; thiamine phosphate from 4-amino-2-methyl-5-diphosphomethylpyrimidine and 4-methyl-5-(2-phosphoethyl)-thiazole: step 1/1. In terms of biological role, condenses 4-methyl-5-(beta-hydroxyethyl)thiazole monophosphate (THZ-P) and 2-methyl-4-amino-5-hydroxymethyl pyrimidine pyrophosphate (HMP-PP) to form thiamine monophosphate (TMP). The sequence is that of Thiamine-phosphate synthase from Corynebacterium efficiens (strain DSM 44549 / YS-314 / AJ 12310 / JCM 11189 / NBRC 100395).